Reading from the N-terminus, the 110-residue chain is Large ribosomal subunit protein uL24 (110 aa).

It belongs to the universal ribosomal protein uL24 family. Part of the 50S ribosomal subunit.

In terms of biological role, one of two assembly initiator proteins, it binds directly to the 5'-end of the 23S rRNA, where it nucleates assembly of the 50S subunit. Its function is as follows. One of the proteins that surrounds the polypeptide exit tunnel on the outside of the subunit. This Chloroflexus aurantiacus (strain ATCC 29366 / DSM 635 / J-10-fl) protein is Large ribosomal subunit protein uL24.